The following is a 382-amino-acid chain: Putative oxidoreductase C1F5.03c (382 aa).

A helical transmembrane segment spans residues 7 to 27 (IVIVGGGITGVSCLYFLAHHP).

It belongs to the TDA3 family.

The protein resides in the cytoplasm. It localises to the membrane. In terms of biological role, putative oxidoreductase that negatively regulates the retrieval of cargo from late endosomes to the Golgi. This chain is Putative oxidoreductase C1F5.03c, found in Schizosaccharomyces pombe (strain 972 / ATCC 24843) (Fission yeast).